The following is a 208-amino-acid chain: MATVLFVKANNRPAEQAVSVKLYEAFLANYKEAHPNDTVVELDLYKEELPYVGVDMINGTFKAGKGFDLTEEEAKAVAVADKYLNQFLEADKVVFGFPLWNLTIPAVLHTYIDYLNRAGKTFKYTPEGPVGLIGDKKIALLNARGGVYSEGPAAEVEMAVKYVASMMGFFGATNMETVVIEGHNQFPDKAEEIIAAGLEEAAKVASKF.

This sequence belongs to the azoreductase type 1 family. As to quaternary structure, homodimer. FMN is required as a cofactor.

The catalysed reaction is 2 a quinone + NADH + H(+) = 2 a 1,4-benzosemiquinone + NAD(+). It carries out the reaction N,N-dimethyl-1,4-phenylenediamine + anthranilate + 2 NAD(+) = 2-(4-dimethylaminophenyl)diazenylbenzoate + 2 NADH + 2 H(+). Functionally, quinone reductase that provides resistance to thiol-specific stress caused by electrophilic quinones. Also exhibits azoreductase activity. Catalyzes the reductive cleavage of the azo bond in aromatic azo compounds to the corresponding amines. The polypeptide is FMN-dependent NADH:quinone oxidoreductase 4 (Bacillus cereus (strain ATCC 10987 / NRS 248)).